Here is a 236-residue protein sequence, read N- to C-terminus: LexA repressor (236 aa).

Residues 26-46 (FDEMKDALDLRSKSGIHRLII) constitute a DNA-binding region (H-T-H motif). Active-site for autocatalytic cleavage activity residues include serine 157 and lysine 195.

This sequence belongs to the peptidase S24 family. As to quaternary structure, homodimer.

It carries out the reaction Hydrolysis of Ala-|-Gly bond in repressor LexA.. Represses a number of genes involved in the response to DNA damage (SOS response), including recA and lexA. In the presence of single-stranded DNA, RecA interacts with LexA causing an autocatalytic cleavage which disrupts the DNA-binding part of LexA, leading to derepression of the SOS regulon and eventually DNA repair. This is LexA repressor from Methylocella silvestris (strain DSM 15510 / CIP 108128 / LMG 27833 / NCIMB 13906 / BL2).